A 108-amino-acid polypeptide reads, in one-letter code: uncharacterized protein (108 aa).

Gly-2 is lipidated: N-myristoyl glycine; by host.

This is an uncharacterized protein from Acanthamoeba polyphaga (Amoeba).